Consider the following 286-residue polypeptide: Phosphatidylserine decarboxylase proenzyme (286 aa).

Active-site charge relay system; for autoendoproteolytic cleavage activity residues include Asp-90, His-147, and Ser-252. Ser-252 functions as the Schiff-base intermediate with substrate; via pyruvic acid; for decarboxylase activity in the catalytic mechanism. The residue at position 252 (Ser-252) is a Pyruvic acid (Ser); by autocatalysis.

This sequence belongs to the phosphatidylserine decarboxylase family. PSD-B subfamily. Prokaryotic type I sub-subfamily. In terms of assembly, heterodimer of a large membrane-associated beta subunit and a small pyruvoyl-containing alpha subunit. It depends on pyruvate as a cofactor. In terms of processing, is synthesized initially as an inactive proenzyme. Formation of the active enzyme involves a self-maturation process in which the active site pyruvoyl group is generated from an internal serine residue via an autocatalytic post-translational modification. Two non-identical subunits are generated from the proenzyme in this reaction, and the pyruvate is formed at the N-terminus of the alpha chain, which is derived from the carboxyl end of the proenzyme. The autoendoproteolytic cleavage occurs by a canonical serine protease mechanism, in which the side chain hydroxyl group of the serine supplies its oxygen atom to form the C-terminus of the beta chain, while the remainder of the serine residue undergoes an oxidative deamination to produce ammonia and the pyruvoyl prosthetic group on the alpha chain. During this reaction, the Ser that is part of the protease active site of the proenzyme becomes the pyruvoyl prosthetic group, which constitutes an essential element of the active site of the mature decarboxylase.

Its subcellular location is the cell membrane. The catalysed reaction is a 1,2-diacyl-sn-glycero-3-phospho-L-serine + H(+) = a 1,2-diacyl-sn-glycero-3-phosphoethanolamine + CO2. It functions in the pathway phospholipid metabolism; phosphatidylethanolamine biosynthesis; phosphatidylethanolamine from CDP-diacylglycerol: step 2/2. Functionally, catalyzes the formation of phosphatidylethanolamine (PtdEtn) from phosphatidylserine (PtdSer). The polypeptide is Phosphatidylserine decarboxylase proenzyme (Pseudomonas fluorescens (strain SBW25)).